The chain runs to 449 residues: Hyaluronidase (449 aa).

An N-terminal signal peptide occupies residues M1–V23. 2 disulfide bridges follow: C47/C340 and C211/C227. Residues N67, N103, and N111 are each glycosylated (N-linked (GlcNAc...) asparagine). E135 acts as the Proton donor in catalysis. A glycan (N-linked (GlcNAc...) asparagine) is linked at N153. A glycan (N-linked (GlcNAc...) asparagine) is linked at N357. Disulfide bonds link C365–C376, C370–C427, and C429–C438. N-linked (GlcNAc...) asparagine glycosylation is present at N401. One can recognise an EGF-like domain in the interval C427–C438.

The protein belongs to the glycosyl hydrolase 56 family. In terms of assembly, monomer. Expressed by the venom gland.

It is found in the secreted. The enzyme catalyses Random hydrolysis of (1-&gt;4)-linkages between N-acetyl-beta-D-glucosamine and D-glucuronate residues in hyaluronate.. Its function is as follows. Snake venom endo-hyaluronidase that degrades hyaluronan to smaller oligosaccharide fragments. In venom, it is not toxic by itself, but increases the diffusion of other venom proteins by degrading the extracellular matrix. In addition, it displays antiedematogenic activity. The sequence is that of Hyaluronidase from Echis pyramidum leakeyi (Leakey's carpet viper).